A 157-amino-acid polypeptide reads, in one-letter code: Probable succinate transporter subunit YjjB (157 aa).

The next 4 membrane-spanning stretches (helical) occupy residues 10-30 (LAQDMALAAIPAVGFAMVFNV), 55-75 (AGFNIEWATFLAALLVGSIGI), 87-107 (IFTVAAVIPMFPGISAYTAMI), and 129-149 (FLKASSIVGALSIGLSIPGLW).

Belongs to the ThrE exporter (TC 2.A.79) family. As to quaternary structure, the transporter is composed of YjjB and YjjP.

The protein resides in the cell inner membrane. Involved in succinate export with YjjP. Both proteins are required for export. Participates in succinate export, but also in the export of other dicarboxylates, such as fumarate and malate. Contributes to succinate production under both aerobic and anaerobic conditions, and increases fumarate and malate production during anaerobic succinate production. The polypeptide is Probable succinate transporter subunit YjjB (Klebsiella aerogenes (strain ATCC 13048 / DSM 30053 / CCUG 1429 / JCM 1235 / KCTC 2190 / NBRC 13534 / NCIMB 10102 / NCTC 10006 / CDC 819-56) (Enterobacter aerogenes)).